We begin with the raw amino-acid sequence, 563 residues long: BOS complex subunit NCLN (563 aa).

The first 42 residues, 1–42 (MLEEAGEVLENVLKASCLPLGFIVFLPAVLLLVAPPLPAADA), serve as a signal peptide directing secretion. The Lumenal segment spans residues 43–522 (AHEFTVYRMQ…VMNAYRVKPA (480 aa)). N-linked (GlcNAc...) asparagine glycosylation is found at Asn-241 and Asn-428. Residues 523-543 (IFDLLLALCIGAYLGMAYTAV) traverse the membrane as a helical segment. At 544-563 (QHFHVLYKTVQRLLLKAKAQ) the chain is on the cytoplasmic side.

This sequence belongs to the nicastrin family. As to quaternary structure, component of the back of Sec61 (BOS) complex, composed of NCLN/Nicalin, NOMO1 and TMEM147. The BOS complex is part of the multi-pass translocon (MPT) complex, composed of three subcomplexes, the GEL complex (composed of RAB5IF/OPTI and TMCO1), the BOS complex (composed of NCLN/Nicalin, NOMO1 and TMEM147) and the PAT complex (composed of WDR83OS/Asterix and CCDC47). The MPT complex associates with the SEC61 complex.

It localises to the endoplasmic reticulum membrane. Its function is as follows. Component of the multi-pass translocon (MPT) complex that mediates insertion of multi-pass membrane proteins into the lipid bilayer of membranes. The MPT complex takes over after the SEC61 complex: following membrane insertion of the first few transmembrane segments of proteins by the SEC61 complex, the MPT complex occludes the lateral gate of the SEC61 complex to promote insertion of subsequent transmembrane regions. May antagonize Nodal signaling and subsequent organization of axial structures during mesodermal patterning, via its interaction with NOMO. The protein is BOS complex subunit NCLN (Ncln) of Rattus norvegicus (Rat).